Here is a 430-residue protein sequence, read N- to C-terminus: MVFVSDSSISLPIWDAPRARGPIVSDLAIPGSKSITNRALILAALASTPSTIIDVLRSRDTDLMTDGLRSLGITITEEAVDRYRVEPGQLSAGSVECGLAGTVMRFLPPVAAFADGPVHFDGDPQARVRPMTSILDALRSLGVEVDNNNLPFTVNAGEVPEGGVVEIDASGSSQFVSGLLLSAPRFKNGVTVKHVGGRLPSMPHIEMTVDMLRSAGIEIEESENQWVVHPGEILGRTWRIEPDLSNATPFLAAAAVTGGTIKINHWPIKTTQPGDAIRSILERMGCEVELVAQGEGYDLSVTGPVALKGIEIDMSDIGELTPTVAALAALASTESRLTGIAHLRGHETDRLAALTAEINKLGGKCTELKDGLLIEPASLHGGVWHSYADHRMATAGAIIGLAVDGVQVEDIKTTSKTFPGFENVWEEMVG.

The 3-phosphoshikimate site is built by lysine 33, serine 34, and arginine 38. Residue lysine 33 participates in phosphoenolpyruvate binding. 2 residues coordinate phosphoenolpyruvate: glycine 101 and arginine 129. Residues serine 172, serine 173, glutamine 174, serine 201, glutamate 319, and histidine 346 each coordinate 3-phosphoshikimate. A phosphoenolpyruvate-binding site is contributed by glutamine 174. The active-site Proton acceptor is the glutamate 319. Phosphoenolpyruvate-binding residues include arginine 350, arginine 391, and lysine 416.

The protein belongs to the EPSP synthase family. In terms of assembly, monomer.

Its subcellular location is the cytoplasm. The enzyme catalyses 3-phosphoshikimate + phosphoenolpyruvate = 5-O-(1-carboxyvinyl)-3-phosphoshikimate + phosphate. The protein operates within metabolic intermediate biosynthesis; chorismate biosynthesis; chorismate from D-erythrose 4-phosphate and phosphoenolpyruvate: step 6/7. In terms of biological role, catalyzes the transfer of the enolpyruvyl moiety of phosphoenolpyruvate (PEP) to the 5-hydroxyl of shikimate-3-phosphate (S3P) to produce enolpyruvyl shikimate-3-phosphate and inorganic phosphate. The sequence is that of 3-phosphoshikimate 1-carboxyvinyltransferase from Corynebacterium glutamicum (strain ATCC 13032 / DSM 20300 / JCM 1318 / BCRC 11384 / CCUG 27702 / LMG 3730 / NBRC 12168 / NCIMB 10025 / NRRL B-2784 / 534).